We begin with the raw amino-acid sequence, 208 residues long: N-(5'-phosphoribosyl)anthranilate isomerase (208 aa).

It belongs to the TrpF family.

The enzyme catalyses N-(5-phospho-beta-D-ribosyl)anthranilate = 1-(2-carboxyphenylamino)-1-deoxy-D-ribulose 5-phosphate. It participates in amino-acid biosynthesis; L-tryptophan biosynthesis; L-tryptophan from chorismate: step 3/5. The chain is N-(5'-phosphoribosyl)anthranilate isomerase from Pyrococcus furiosus (strain ATCC 43587 / DSM 3638 / JCM 8422 / Vc1).